Here is a 74-residue protein sequence, read N- to C-terminus: Ferredoxin-like protein in nif region (74 aa).

Positions 2 to 30 (PFKIIASQCTSCSACEPLCPNVAISEKGG) constitute a 4Fe-4S ferredoxin-type domain. 7 residues coordinate [4Fe-4S] cluster: Cys10, Cys13, Cys16, Cys20, Cys39, Cys51, and Cys55.

[4Fe-4S] cluster serves as cofactor.

The sequence is that of Ferredoxin-like protein in nif region (frxA) from Bradyrhizobium diazoefficiens (strain JCM 10833 / BCRC 13528 / IAM 13628 / NBRC 14792 / USDA 110).